Here is a 280-residue protein sequence, read N- to C-terminus: Acetylglutamate kinase (280 aa).

Residues 64–65 (GG), R86, and N177 contribute to the substrate site.

It belongs to the acetylglutamate kinase family. ArgB subfamily.

It is found in the cytoplasm. It catalyses the reaction N-acetyl-L-glutamate + ATP = N-acetyl-L-glutamyl 5-phosphate + ADP. Its pathway is amino-acid biosynthesis; L-arginine biosynthesis; N(2)-acetyl-L-ornithine from L-glutamate: step 2/4. In terms of biological role, catalyzes the ATP-dependent phosphorylation of N-acetyl-L-glutamate. The polypeptide is Acetylglutamate kinase (Nautilia profundicola (strain ATCC BAA-1463 / DSM 18972 / AmH)).